Here is a 601-residue protein sequence, read N- to C-terminus: Elongation factor 4 (601 aa).

In terms of domain architecture, tr-type G spans 6 to 188 (AHIRNFSIIA…QIVRKVPPPK (183 aa)). GTP is bound by residues 18-23 (DHGKST) and 135-138 (NKVD).

It belongs to the TRAFAC class translation factor GTPase superfamily. Classic translation factor GTPase family. LepA subfamily.

It localises to the cell inner membrane. The enzyme catalyses GTP + H2O = GDP + phosphate + H(+). Its function is as follows. Required for accurate and efficient protein synthesis under certain stress conditions. May act as a fidelity factor of the translation reaction, by catalyzing a one-codon backward translocation of tRNAs on improperly translocated ribosomes. Back-translocation proceeds from a post-translocation (POST) complex to a pre-translocation (PRE) complex, thus giving elongation factor G a second chance to translocate the tRNAs correctly. Binds to ribosomes in a GTP-dependent manner. The chain is Elongation factor 4 from Anaeromyxobacter sp. (strain Fw109-5).